The primary structure comprises 491 residues: Glutamyl-tRNA(Gln) amidotransferase subunit A (491 aa).

Residues Lys79 and Ser158 each act as charge relay system in the active site. Ser182 acts as the Acyl-ester intermediate in catalysis.

This sequence belongs to the amidase family. GatA subfamily. As to quaternary structure, heterotrimer of A, B and C subunits.

It carries out the reaction L-glutamyl-tRNA(Gln) + L-glutamine + ATP + H2O = L-glutaminyl-tRNA(Gln) + L-glutamate + ADP + phosphate + H(+). Functionally, allows the formation of correctly charged Gln-tRNA(Gln) through the transamidation of misacylated Glu-tRNA(Gln) in organisms which lack glutaminyl-tRNA synthetase. The reaction takes place in the presence of glutamine and ATP through an activated gamma-phospho-Glu-tRNA(Gln). This Maricaulis maris (strain MCS10) (Caulobacter maris) protein is Glutamyl-tRNA(Gln) amidotransferase subunit A.